The following is a 237-amino-acid chain: Ribosomal RNA small subunit methyltransferase G (237 aa).

Residues G78, F83, 129 to 130 (AE), and R148 contribute to the S-adenosyl-L-methionine site. The interval 218-237 (KKETPRKYPRKAGTPNKKPL) is disordered.

This sequence belongs to the methyltransferase superfamily. RNA methyltransferase RsmG family.

Its subcellular location is the cytoplasm. Specifically methylates the N7 position of a guanine in 16S rRNA. The sequence is that of Ribosomal RNA small subunit methyltransferase G from Streptococcus uberis (strain ATCC BAA-854 / 0140J).